Here is a 123-residue protein sequence, read N- to C-terminus: Small ribosomal subunit protein uS12 (123 aa).

Asp89 carries the 3-methylthioaspartic acid modification.

The protein belongs to the universal ribosomal protein uS12 family. As to quaternary structure, part of the 30S ribosomal subunit. Contacts proteins S8 and S17. May interact with IF1 in the 30S initiation complex.

Its function is as follows. With S4 and S5 plays an important role in translational accuracy. Functionally, interacts with and stabilizes bases of the 16S rRNA that are involved in tRNA selection in the A site and with the mRNA backbone. Located at the interface of the 30S and 50S subunits, it traverses the body of the 30S subunit contacting proteins on the other side and probably holding the rRNA structure together. The combined cluster of proteins S8, S12 and S17 appears to hold together the shoulder and platform of the 30S subunit. In Prochlorococcus marinus (strain MIT 9211), this protein is Small ribosomal subunit protein uS12.